The following is a 1081-amino-acid chain: WD repeat-containing protein 64 (1081 aa).

WD repeat units follow at residues D102–K152, G153–Q198, E199–S265, K266–N314, L315–T356, K357–L400, L401–I444, Q445–L488, Q489–G532, Q533–E631, R632–S740, K741–L803, L804–F857, and K858–H895. A compositionally biased stretch (low complexity) spans C726–Q745. The tract at residues C726–T757 is disordered. Residues S746–Q756 are compositionally biased toward basic and acidic residues. Positions D1036–S1060 are disordered. A compositionally biased stretch (basic residues) spans G1043 to S1060.

The chain is WD repeat-containing protein 64 (WDR64) from Homo sapiens (Human).